The following is a 56-amino-acid chain: UPF0434 protein CBUD_1597.1 (56 aa).

It belongs to the UPF0434 family.

This is UPF0434 protein CBUD_1597.1 from Coxiella burnetii (strain Dugway 5J108-111).